The sequence spans 309 residues: Transcriptional regulator HilD (309 aa).

Positions 209 to 306 constitute an HTH araC/xylS-type domain; sequence ERVYNIISSS…KTTPSTFIKM (98 aa). DNA-binding regions (H-T-H motif) lie at residues 226 to 247 and 273 to 296; these read TDVA…AEEG and VNAV…KKYF.

This Salmonella typhimurium (strain SL1344) protein is Transcriptional regulator HilD (hilD).